Consider the following 72-residue polypeptide: Translation initiation factor IF-1 (72 aa).

Residues 1–72 (MAKQDVIELE…SRGRITYRYK (72 aa)) enclose the S1-like domain.

The protein belongs to the IF-1 family. In terms of assembly, component of the 30S ribosomal translation pre-initiation complex which assembles on the 30S ribosome in the order IF-2 and IF-3, IF-1 and N-formylmethionyl-tRNA(fMet); mRNA recruitment can occur at any time during PIC assembly.

It localises to the cytoplasm. Functionally, one of the essential components for the initiation of protein synthesis. Stabilizes the binding of IF-2 and IF-3 on the 30S subunit to which N-formylmethionyl-tRNA(fMet) subsequently binds. Helps modulate mRNA selection, yielding the 30S pre-initiation complex (PIC). Upon addition of the 50S ribosomal subunit IF-1, IF-2 and IF-3 are released leaving the mature 70S translation initiation complex. The protein is Translation initiation factor IF-1 of Staphylococcus epidermidis (strain ATCC 35984 / DSM 28319 / BCRC 17069 / CCUG 31568 / BM 3577 / RP62A).